We begin with the raw amino-acid sequence, 127 residues long: Urotensin-2 (127 aa).

A signal peptide spans 1–16 (MSKLFFCCLILAGSFC). Positions 17–111 (SFRSLPIIVP…RLQSKDRKQF (95 aa)) are excised as a propeptide. Cysteines 121 and 126 form a disulfide.

It belongs to the urotensin-2 family. In terms of tissue distribution, central nervous system. Spinal cord.

It is found in the secreted. Functionally, involved in smooth muscle stimulating and ion mobilizing activities. It has a suggested role as a corticotropin-releasing factor. The protein is Urotensin-2 (UTS2) of Pelophylax ridibundus (Marsh frog).